Consider the following 828-residue polypeptide: Periplasmic nitrate reductase (828 aa).

Residues Met1–Ala31 constitute a signal peptide (tat-type signal). The 4Fe-4S Mo/W bis-MGD-type domain maps to Ile39 to Asp95. [4Fe-4S] cluster is bound by residues Cys46, Cys49, Cys53, and Cys81. Mo-bis(molybdopterin guanine dinucleotide) is bound by residues Lys83, Gln150, Asn175, Cys179, Trp212 to Met219, Ser243 to His247, Gln262 to Asp264, Met372, Gln376, Asn482, Ser508 to Asp509, Lys531, Asp558, and Thr718 to Thr727. A substrate-binding site is contributed by Phe794. Mo-bis(molybdopterin guanine dinucleotide) is bound by residues Asn802 and Lys819.

The protein belongs to the prokaryotic molybdopterin-containing oxidoreductase family. NasA/NapA/NarB subfamily. Component of the periplasmic nitrate reductase NapAB complex composed of NapA and NapB. It depends on [4Fe-4S] cluster as a cofactor. Mo-bis(molybdopterin guanine dinucleotide) is required as a cofactor. In terms of processing, predicted to be exported by the Tat system. The position of the signal peptide cleavage has not been experimentally proven.

The protein resides in the periplasm. The catalysed reaction is 2 Fe(II)-[cytochrome] + nitrate + 2 H(+) = 2 Fe(III)-[cytochrome] + nitrite + H2O. Catalytic subunit of the periplasmic nitrate reductase complex NapAB. Receives electrons from NapB and catalyzes the reduction of nitrate to nitrite. This Salmonella paratyphi C (strain RKS4594) protein is Periplasmic nitrate reductase.